Here is a 239-residue protein sequence, read N- to C-terminus: 4-hydroxy-tetrahydrodipicolinate reductase (239 aa).

NAD(+)-binding positions include 8 to 13 (GSTGKM), 78 to 80 (GTT), and 102 to 105 (SANM). Residue His134 is the Proton donor/acceptor of the active site. His135 is a binding site for (S)-2,3,4,5-tetrahydrodipicolinate. Lys138 acts as the Proton donor in catalysis. 144–145 (GT) lines the (S)-2,3,4,5-tetrahydrodipicolinate pocket.

This sequence belongs to the DapB family.

It localises to the cytoplasm. The enzyme catalyses (S)-2,3,4,5-tetrahydrodipicolinate + NAD(+) + H2O = (2S,4S)-4-hydroxy-2,3,4,5-tetrahydrodipicolinate + NADH + H(+). The catalysed reaction is (S)-2,3,4,5-tetrahydrodipicolinate + NADP(+) + H2O = (2S,4S)-4-hydroxy-2,3,4,5-tetrahydrodipicolinate + NADPH + H(+). It functions in the pathway amino-acid biosynthesis; L-lysine biosynthesis via DAP pathway; (S)-tetrahydrodipicolinate from L-aspartate: step 4/4. In terms of biological role, catalyzes the conversion of 4-hydroxy-tetrahydrodipicolinate (HTPA) to tetrahydrodipicolinate. The protein is 4-hydroxy-tetrahydrodipicolinate reductase of Rickettsia africae (strain ESF-5).